A 129-amino-acid polypeptide reads, in one-letter code: Large ribosomal subunit protein bL20 (129 aa).

The span at 1 to 17 shows a compositional bias: basic residues; the sequence is MARVKRSVNAHKKRRSV. The segment at 1-29 is disordered; it reads MARVKRSVNAHKKRRSVLKASKGYRGQRS.

This sequence belongs to the bacterial ribosomal protein bL20 family.

Functionally, binds directly to 23S ribosomal RNA and is necessary for the in vitro assembly process of the 50S ribosomal subunit. It is not involved in the protein synthesizing functions of that subunit. The sequence is that of Large ribosomal subunit protein bL20 from Mycobacterium ulcerans (strain Agy99).